The primary structure comprises 354 residues: cAMP-dependent protein kinase catalytic subunit 2 (354 aa).

The region spanning 45-301 (YITRAVLGNG…SSDVKSHPWF (257 aa)) is the Protein kinase domain. Residues 51–59 (LGNGSFGTV) and Lys-74 contribute to the ATP site. Catalysis depends on Asp-168, which acts as the Proton acceptor. Positions 302-354 (QGVDWFGILNQEVTAPYQPTISGAEDLSNFENFEFKDRYKSRINRHPELFANF) constitute an AGC-kinase C-terminal domain.

The protein belongs to the protein kinase superfamily. AGC Ser/Thr protein kinase family. cAMP subfamily. More abundant in adult body than adult head.

It carries out the reaction L-seryl-[protein] + ATP = O-phospho-L-seryl-[protein] + ADP + H(+). The enzyme catalyses L-threonyl-[protein] + ATP = O-phospho-L-threonyl-[protein] + ADP + H(+). The protein is cAMP-dependent protein kinase catalytic subunit 2 (Pka-C2) of Drosophila melanogaster (Fruit fly).